Consider the following 284-residue polypeptide: L-ribulose-5-phosphate 3-epimerase UlaE (284 aa).

This sequence belongs to the L-ribulose-5-phosphate 3-epimerase family.

It catalyses the reaction L-ribulose 5-phosphate = L-xylulose 5-phosphate. The protein operates within cofactor degradation; L-ascorbate degradation; D-xylulose 5-phosphate from L-ascorbate: step 3/4. Catalyzes the isomerization of L-xylulose-5-phosphate to L-ribulose-5-phosphate. Is involved in the anaerobic L-ascorbate utilization. The protein is L-ribulose-5-phosphate 3-epimerase UlaE of Escherichia coli O17:K52:H18 (strain UMN026 / ExPEC).